The primary structure comprises 199 residues: Probable chemoreceptor glutamine deamidase CheD (199 aa).

It belongs to the CheD family.

It carries out the reaction L-glutaminyl-[protein] + H2O = L-glutamyl-[protein] + NH4(+). Probably deamidates glutamine residues to glutamate on methyl-accepting chemotaxis receptors (MCPs), playing an important role in chemotaxis. The chain is Probable chemoreceptor glutamine deamidase CheD from Cereibacter sphaeroides (strain ATCC 17029 / ATH 2.4.9) (Rhodobacter sphaeroides).